The sequence spans 259 residues: Phosphoadenosine 5'-phosphosulfate reductase (259 aa).

The active-site Nucleophile; cysteine thiosulfonate intermediate is cysteine 244.

This sequence belongs to the PAPS reductase family. CysH subfamily.

Its subcellular location is the cytoplasm. The catalysed reaction is [thioredoxin]-disulfide + sulfite + adenosine 3',5'-bisphosphate + 2 H(+) = [thioredoxin]-dithiol + 3'-phosphoadenylyl sulfate. Its pathway is sulfur metabolism; hydrogen sulfide biosynthesis; sulfite from sulfate: step 3/3. Its function is as follows. Catalyzes the formation of sulfite from phosphoadenosine 5'-phosphosulfate (PAPS) using thioredoxin as an electron donor. This Vibrio parahaemolyticus serotype O3:K6 (strain RIMD 2210633) protein is Phosphoadenosine 5'-phosphosulfate reductase.